We begin with the raw amino-acid sequence, 530 residues long: Glucose-6-phosphate isomerase (530 aa).

E347 functions as the Proton donor in the catalytic mechanism. Residues H378 and K493 contribute to the active site.

It belongs to the GPI family.

The protein resides in the cytoplasm. It carries out the reaction alpha-D-glucose 6-phosphate = beta-D-fructose 6-phosphate. It participates in carbohydrate biosynthesis; gluconeogenesis. The protein operates within carbohydrate degradation; glycolysis; D-glyceraldehyde 3-phosphate and glycerone phosphate from D-glucose: step 2/4. In terms of biological role, catalyzes the reversible isomerization of glucose-6-phosphate to fructose-6-phosphate. In Chlamydia abortus (strain DSM 27085 / S26/3) (Chlamydophila abortus), this protein is Glucose-6-phosphate isomerase.